A 574-amino-acid polypeptide reads, in one-letter code: Penicillin-binding protein activator LpoA (574 aa).

A signal peptide spans 1–25; sequence MTILLQRAKFKKRLMPILFPLMLAG. The N-palmitoyl cysteine moiety is linked to residue Cys26. Residue Cys26 is the site of S-diacylglycerol cysteine attachment.

Belongs to the LpoA family. In terms of assembly, interacts with PBP1a.

The protein resides in the cell outer membrane. In terms of biological role, regulator of peptidoglycan synthesis that is essential for the function of penicillin-binding protein 1A (PBP1a). This chain is Penicillin-binding protein activator LpoA, found in Mannheimia succiniciproducens (strain KCTC 0769BP / MBEL55E).